A 211-amino-acid chain; its full sequence is Tudor-interacting repair regulator protein (211 aa).

Glycyl lysine isopeptide (Lys-Gly) (interchain with G-Cter in ubiquitin) cross-links involve residues lysine 10 and lysine 151. The interval 118 to 205 (TLEQLHAVEI…TEKQKKALEK (88 aa)) is interaction with PXN.

Belongs to the Nudix hydrolase family. TIRR subfamily. As to quaternary structure, homodimer. Interacts with TP53BP1 (via the Tudor-like domain); interaction is abolished following DNA damage and TP53BP1 phosphorylation by ATM. Interacts (via the cytoplasmic part) with SDC4. Interacts with TGFB1I1 and PXN.

The protein localises to the nucleus. Key regulator of TP53BP1 required to stabilize TP53BP1 and regulate its recruitment to chromatin. In absence of DNA damage, interacts with the tandem Tudor-like domain of TP53BP1, masking the region that binds histone H4 dimethylated at 'Lys-20' (H4K20me2), thereby preventing TP53BP1 recruitment to chromatin and maintaining TP53BP1 localization to the nucleus. Following DNA damage, ATM-induced phosphorylation of TP53BP1 and subsequent recruitment of RIF1 leads to dissociate NUDT16L1/TIRR from TP53BP1, unmasking the tandem Tudor-like domain and allowing recruitment of TP53BP1 to DNA double strand breaks (DSBs). Binds U8 snoRNA. The protein is Tudor-interacting repair regulator protein of Homo sapiens (Human).